The following is a 408-amino-acid chain: Phosphoenolpyruvate/phosphate translocator 1, chloroplastic (408 aa).

A chloroplast-targeting transit peptide spans 1-85 (MQSSAVFSLS…SLDTNRFRTA (85 aa)). At alanine 86 the chain carries N-acetylalanine. The next 8 membrane-spanning stretches (helical) occupy residues 105–125 (VLELGLLFAMWYLFNIYFNIY), 137–157 (MTVTLVQFAVGSVLITIMWVL), 165–185 (ISGAQLAAILPLAVVHTLGNL), 198–218 (FTHTIKAMEPFFSVLLSAMFL), 222–242 (PTPWVLGAIVPIVGGVALASI), 283–303 (ITLFSIITLMSLVLMAPVTFF), 324–346 (IYTKSLIAALCFHAYQQVSYMIL), and 377–396 (VSPVNAFGTGIALAGVFLYS). Residues 124–241 (IYNKQVLKAL…PIVGGVALAS (118 aa)) form the EamA domain.

Belongs to the TPT transporter family. PPT (TC 2.A.7.9) subfamily. Expressed in root columella, lateral root cap and root vasculature tissue. In leaves, highly expressed in xylem parenchyma cells. In flowers, expressed in sepals, petals, filaments of the stamens, anthers and stigma.

It is found in the plastid. The protein resides in the chloroplast membrane. Its function is as follows. Phosphoenolpyruvate/phosphate translocator that transports phosphoenolpyruvate (PEP), 2-phosphoglycerate, 3-phosphoglycerate and dihydroxyacetone phosphate. Imports PEP to the chloroplast stroma as one substrate of the shikimate pathway, from which aromatic amino acids and a variety of secondary products derive. Required for correct leaf mesophyll cell development and expression of chlorophyll a/b binding protein 3 (CAB3). In Arabidopsis thaliana (Mouse-ear cress), this protein is Phosphoenolpyruvate/phosphate translocator 1, chloroplastic (PPT1).